A 508-amino-acid polypeptide reads, in one-letter code: Erythropoietin receptor (508 aa).

An N-terminal signal peptide occupies residues 1–24 (MNHLWTHLWPGVGSLCLLLAGAAW). Over 25–250 (ASLPKPLDPK…SLLTASDLDP (226 aa)) the chain is Extracellular. Cys-52 and Cys-62 are oxidised to a cystine. Asn-76 carries an N-linked (GlcNAc...) asparagine glycan. Cys-91 and Cys-107 form a disulfide bridge. The Fibronectin type-III domain maps to 148–247 (PPAGLLARRA…EPASLLTASD (100 aa)). A glycan (N-linked (GlcNAc...) asparagine) is linked at Asn-184. A WSXWS motif motif is present at residues 233–237 (WSAWS). The helical transmembrane segment at 251-273 (LILTLSLILVLILLLLAVLALLS) threads the bilayer. Residues 274–508 (HRRTLKQKIW…PSPPGYVACS (235 aa)) are Cytoplasmic-facing. Residue Lys-281 forms a Glycyl lysine isopeptide (Lys-Gly) (interchain with G-Cter in ubiquitin) linkage. A Box 1 motif motif is present at residues 282-290 (IWPGIPSPE). Phosphotyrosine; by JAK2 is present on residues Tyr-368 and Tyr-426. The ITIM motif signature appears at 452–457 (IKYLYL). Lys-453 participates in a covalent cross-link: Glycyl lysine isopeptide (Lys-Gly) (interchain with G-Cter in ubiquitin). Phosphotyrosine; by JAK2 occurs at positions 454, 456, 468, 489, and 504. A disordered region spans residues 467-508 (DYSSGGSQGAQGDSLNSPFLNPYENSLIPAPEPSPPGYVACS).

It belongs to the type I cytokine receptor family. Type 1 subfamily. As to quaternary structure, forms homodimers on EPO stimulation. The tyrosine-phosphorylated form interacts with several SH2 domain-containing proteins including LYN, the adapter protein SH2B2, PTPN6, PTPN11, JAK2, PI3 kinases, STAT5A/B, SOCS3, CRKL. Interacts with INPP5D/SHIP1. SH2B2 binding inhibits the JAK-STAT signaling. Interacts with RHEX; this interaction occurs in a erythropoietin (EPO)-dependent manner. Interacts with ATXN2L. In terms of processing, on EPO stimulation, phosphorylated on C-terminal tyrosine residues by JAK2. The phosphotyrosine motifs are also recruitment sites for several SH2-containing proteins and adapter proteins which mediate cell proliferation. Phosphorylation on Tyr-454 is required for PTPN6 interaction, Tyr-426 for PTPN11. Tyr-426 is also required for SOCS3 binding, but Tyr-454/Tyr-456 motif is the preferred binding site. Post-translationally, ubiquitinated by the ECS(SOCS2) complex following ligand-binding and phosphorylation by JAK2, leading to its degradation by the proteasome. Regulation by the ECS(SOCS2) complex acts as a negative feedback loop of erythropoietin-mediated signaling pathway. Ubiquitination at Lys-281 mediates receptor internalization, whereas ubiquitination at Lys-453 promotes trafficking of activated receptors to the lysosomes for degradation. Ubiquitinated by NOSIP; appears to be either multi-monoubiquitinated or polyubiquitinated. Ubiquitination mediates proliferation and survival of EPO-dependent cells.

It is found in the cell membrane. Its function is as follows. Receptor for erythropoietin, which mediates erythropoietin-induced erythroblast proliferation and differentiation. Upon EPO stimulation, EPOR dimerizes triggering the JAK2/STAT5 signaling cascade. In some cell types, can also activate STAT1 and STAT3. May also activate the LYN tyrosine kinase. In terms of biological role, isoform EPOR-T acts as a dominant-negative receptor of EPOR-mediated signaling. The protein is Erythropoietin receptor (EPOR) of Canis lupus familiaris (Dog).